Reading from the N-terminus, the 512-residue chain is Maturase K (512 aa).

The protein belongs to the intron maturase 2 family. MatK subfamily.

The protein localises to the plastid. It is found in the chloroplast. Its function is as follows. Usually encoded in the trnK tRNA gene intron. Probably assists in splicing its own and other chloroplast group II introns. This Oenothera parviflora (Small-flowered evening primrose) protein is Maturase K.